We begin with the raw amino-acid sequence, 409 residues long: Tryptophan synthase beta chain (409 aa).

Position 100 is an N6-(pyridoxal phosphate)lysine (lysine 100).

The protein belongs to the TrpB family. In terms of assembly, tetramer of two alpha and two beta chains. Requires pyridoxal 5'-phosphate as cofactor.

It catalyses the reaction (1S,2R)-1-C-(indol-3-yl)glycerol 3-phosphate + L-serine = D-glyceraldehyde 3-phosphate + L-tryptophan + H2O. It functions in the pathway amino-acid biosynthesis; L-tryptophan biosynthesis; L-tryptophan from chorismate: step 5/5. Its function is as follows. The beta subunit is responsible for the synthesis of L-tryptophan from indole and L-serine. The sequence is that of Tryptophan synthase beta chain from Pyrobaculum arsenaticum (strain DSM 13514 / JCM 11321 / PZ6).